Reading from the N-terminus, the 463-residue chain is Vacuolar cation/proton exchanger 1 (463 aa).

Alanine 2 is modified (N-acetylalanine). Over 2-68 the chain is Cytoplasmic; sequence AGIVTEPWSV…LKDFLSNLQE (67 aa). Residues 25 to 33 are required for autoinhibitory regulation; sequence SRELRLGRT. Positions 56-62 are required for interaction with autoinhibitory region; sequence YKGLKDF. Residues 69 to 89 form a helical membrane-spanning segment; the sequence is VILGTKLAILFPAIPAAIICT. The segment at 87 to 95 is required for Ca(2+)/H(+) exchange activity; the sequence is ICTYCGVSQ. Over 90–96 the chain is Extracellular; it reads YCGVSQP. Residues 97–116 traverse the membrane as a helical segment; it reads WIFGLSLLGLTPLAERVSFL. At 117-127 the chain is on the cytoplasmic side; it reads TEQLAFYTGPT. A helical membrane pass occupies residues 128–148; it reads LGGLLNATCGNATELIIAILA. The cation selection stretch occupies residues 137–172; the sequence is GNATELIIAILALTNNKVAVVKYSLLGSILSNLLLV. Over 149–161 the chain is Extracellular; that stretch reads LTNNKVAVVKYSL. The chain crosses the membrane as a helical span at residues 162-182; it reads LGSILSNLLLVLGTSLFCGGI. Residues 183 to 197 are Cytoplasmic-facing; the sequence is ANIRREQRFDRKQAD. The helical transmembrane segment at 198-218 threads the bilayer; it reads VNFFLLLLGFLCHLLPLLVGY. The Extracellular segment spans residues 219-238; sequence LKNGEASAAVLSDMQLSISR. The chain crosses the membrane as a helical span at residues 239 to 259; the sequence is GFSIVMLISYIAYLVFQLWTH. Over 260–281 the chain is Cytoplasmic; the sequence is RQLFDAQEQEDEYDDDVEQETA. The helical transmembrane segment at 282–302 threads the bilayer; it reads VISFWSGFAWLVGMTLVIALL. At 303–325 the chain is on the extracellular side; the sequence is SEYVVATIEEASDKWNLSVSFIS. Residue asparagine 318 is glycosylated (N-linked (GlcNAc...) asparagine). Residues 326–346 traverse the membrane as a helical segment; it reads IILLPIVGNAAEHAGAVIFAF. Residues 333–368 are cation selection; it reads GNAAEHAGAVIFAFKNKLDISLGVALGSATQIGLFV. Topologically, residues 347–360 are cytoplasmic; it reads KNKLDISLGVALGS. A helical transmembrane segment spans residues 361-381; it reads ATQIGLFVVPLTIIVAWILGI. At 382–384 the chain is on the extracellular side; it reads NMD. Residues 385–405 traverse the membrane as a helical segment; sequence LNFGPLETGCLAVSIIITAFT. At 406–411 the chain is on the cytoplasmic side; that stretch reads LQDGSS. The helical transmembrane segment at 412 to 432 threads the bilayer; that stretch reads HYMKGLVLLLCYFIIAICFFV. The Extracellular portion of the chain corresponds to 433-463; that stretch reads DKLPQKQNAIHLGHQAMNNVVTATGGGVFSS.

It belongs to the Ca(2+):cation antiporter (CaCA) (TC 2.A.19) family. Cation/proton exchanger (CAX) subfamily. As to quaternary structure, interacts with GRXS14 and CXIP4. Expressed at low levels in leaves, stems and flowers.

Its subcellular location is the vacuole membrane. Activated by monothiol glutaredoxin GRXS14 and CXIP4. Inhibited by excess of Ca(2+) and Cd(2+), Na(+) and K(+), but not Mn(2+). Functionally, vacuolar cation/proton exchanger (CAX). Translocates Ca(2+) and other metal ions into vacuoles using the proton gradient formed by H(+)-ATPase and H(+)-pyrophosphatase. Involved in ion homeostasis in association with CAX3. May play a role in cold-acclimation response. This chain is Vacuolar cation/proton exchanger 1 (CAX1), found in Arabidopsis thaliana (Mouse-ear cress).